A 523-amino-acid polypeptide reads, in one-letter code: GMP synthase [glutamine-hydrolyzing] (523 aa).

A Glutamine amidotransferase type-1 domain is found at 8-205 (KILILDFGSQ…VVKICGCERN (198 aa)). C85 (nucleophile) is an active-site residue. Catalysis depends on residues H179 and E181. The GMPS ATP-PPase domain maps to 206–398 (WTPENIIEDA…LGLPAEMLNR (193 aa)). Residue 233 to 239 (SGGVDSS) coordinates ATP.

In terms of assembly, homodimer.

It carries out the reaction XMP + L-glutamine + ATP + H2O = GMP + L-glutamate + AMP + diphosphate + 2 H(+). It functions in the pathway purine metabolism; GMP biosynthesis; GMP from XMP (L-Gln route): step 1/1. Functionally, catalyzes the synthesis of GMP from XMP. This is GMP synthase [glutamine-hydrolyzing] from Pasteurella multocida (strain Pm70).